Here is a 344-residue protein sequence, read N- to C-terminus: tRNA N6-adenosine threonylcarbamoyltransferase (344 aa).

Positions 119 and 123 each coordinate Fe cation. Residues 141 to 145, D174, G187, D191, and N280 each bind substrate; that span reads VVSGG. Fe cation is bound at residue D310.

Belongs to the KAE1 / TsaD family. The cofactor is Fe(2+).

Its subcellular location is the cytoplasm. The catalysed reaction is L-threonylcarbamoyladenylate + adenosine(37) in tRNA = N(6)-L-threonylcarbamoyladenosine(37) in tRNA + AMP + H(+). Required for the formation of a threonylcarbamoyl group on adenosine at position 37 (t(6)A37) in tRNAs that read codons beginning with adenine. Is involved in the transfer of the threonylcarbamoyl moiety of threonylcarbamoyl-AMP (TC-AMP) to the N6 group of A37, together with TsaE and TsaB. TsaD likely plays a direct catalytic role in this reaction. This is tRNA N6-adenosine threonylcarbamoyltransferase from Listeria monocytogenes serovar 1/2a (strain ATCC BAA-679 / EGD-e).